The sequence spans 333 residues: Glycerol-3-phosphate dehydrogenase [NAD(P)+] (333 aa).

NADPH-binding residues include W12, K33, and K105. Sn-glycerol 3-phosphate contacts are provided by K105, G136, and S138. An NADPH-binding site is contributed by A140. Sn-glycerol 3-phosphate is bound by residues K191, D244, S254, R255, and N256. Residue K191 is the Proton acceptor of the active site. R255 provides a ligand contact to NADPH. 2 residues coordinate NADPH: V279 and E281.

This sequence belongs to the NAD-dependent glycerol-3-phosphate dehydrogenase family.

The protein resides in the cytoplasm. It catalyses the reaction sn-glycerol 3-phosphate + NAD(+) = dihydroxyacetone phosphate + NADH + H(+). The enzyme catalyses sn-glycerol 3-phosphate + NADP(+) = dihydroxyacetone phosphate + NADPH + H(+). It participates in membrane lipid metabolism; glycerophospholipid metabolism. Its function is as follows. Catalyzes the reduction of the glycolytic intermediate dihydroxyacetone phosphate (DHAP) to sn-glycerol 3-phosphate (G3P), the key precursor for phospholipid synthesis. This chain is Glycerol-3-phosphate dehydrogenase [NAD(P)+], found in Protochlamydia amoebophila (strain UWE25).